The primary structure comprises 45 residues: Large ribosomal subunit protein bL34 (45 aa).

Residues 1–45 (MTKRTFGGTSRKRKRVSGFRVRMRSHTGRRVIKSRRQKGRERIAV) form a disordered region. Basic residues predominate over residues 10-39 (SRKRKRVSGFRVRMRSHTGRRVIKSRRQKG).

This sequence belongs to the bacterial ribosomal protein bL34 family.

The chain is Large ribosomal subunit protein bL34 from Prochlorococcus marinus (strain MIT 9301).